The primary structure comprises 686 residues: Pentatricopeptide repeat-containing protein 1, mitochondrial (686 aa).

A compositionally biased stretch (polar residues) spans 55–67; that stretch reads RMSSLCSDSSTPV. The segment at 55 to 79 is disordered; the sequence is RMSSLCSDSSTPVAPQEEEEEESFG. PPR repeat units follow at residues 124–160, 161–195, 196–234, 235–269, and 270–306; these read TPYW…RLQP, LECN…DLEP, SDAT…NFQL, NLKT…GHAV, and TEET…GIKP. The interval 383 to 407 is disordered; it reads KLEGPPAFPEARETSRTQPEVETKA. Residues 392 to 407 show a composition bias toward basic and acidic residues; that stretch reads EARETSRTQPEVETKA. PPR repeat units follow at residues 508 to 542 and 575 to 609; these read DITF…GIVP and NTHI…SVPV.

The protein belongs to the PTCD1 family. In terms of assembly, associates with mitochondrial leucine tRNAs. Interacts with ELAC2.

It localises to the mitochondrion matrix. Functionally, mitochondrial protein implicated in negative regulation of leucine tRNA levels, as well as negative regulation of mitochondria-encoded proteins and COX activity. Also affects the 3'-processing of mitochondrial tRNAs. The protein is Pentatricopeptide repeat-containing protein 1, mitochondrial (Ptcd1) of Rattus norvegicus (Rat).